The sequence spans 310 residues: Homoserine kinase (310 aa).

91–101 contacts ATP; that stretch reads PIGSGLGSSAC.

This sequence belongs to the GHMP kinase family. Homoserine kinase subfamily.

Its subcellular location is the cytoplasm. It catalyses the reaction L-homoserine + ATP = O-phospho-L-homoserine + ADP + H(+). It participates in amino-acid biosynthesis; L-threonine biosynthesis; L-threonine from L-aspartate: step 4/5. Functionally, catalyzes the ATP-dependent phosphorylation of L-homoserine to L-homoserine phosphate. This chain is Homoserine kinase, found in Shigella sonnei (strain Ss046).